A 23-amino-acid polypeptide reads, in one-letter code: Alpha-amanitin proprotein (23 aa).

Residue Ile-1 is modified to (3R,4R)-4,5-dihydroxyisoleucine; in form alpha-amanitin. Ile-1 is subject to (3R,4S)-4-hydroxyisoleucine; in form gamma-amanitin. The cyclopeptide (Ile-Pro) cross-link spans 1–8 (IWGIGCNP). The segment at residues 2–6 (WGIGC) is a cross-link (2'-cysteinyl-6'-hydroxytryptophan sulfoxide (Trp-Cys)). Pro-8 is subject to 4-hydroxyproline. Residues 9 to 23 (CVGDEVTALITRGEA) constitute a propeptide that is removed on maturation.

It belongs to the MSDIN fungal toxin family. In terms of processing, processed by the macrocyclase-peptidase enzyme POPB to yield a toxic cyclic decapeptide. POPB first removes 10 residues from the N-terminus. Conformational trapping of the remaining peptide forces the enzyme to release this intermediate rather than proceed to macrocyclization. The enzyme rebinds the remaining peptide in a different conformation and catalyzes macrocyclization of the N-terminal 8 residues.

Major toxin belonging to the bicyclic octapeptides amatoxins that acts by binding non-competitively to RNA polymerase II and greatly slowing the elongation of transcripts from target promoters. The protein is Alpha-amanitin proprotein of Amanita fuligineoides.